A 388-amino-acid chain; its full sequence is Protein RecA (388 aa).

Position 79–86 (79–86 (GPESSGKT)) interacts with ATP. Positions 347-388 (IDGEEVSEQDTENKKDEPKKEEAVNEEVPLDLGDELEIEIEE) are disordered. Basic and acidic residues predominate over residues 357 to 369 (TENKKDEPKKEEA). Residues 370-388 (VNEEVPLDLGDELEIEIEE) are compositionally biased toward acidic residues.

It belongs to the RecA family.

It localises to the cytoplasm. Its function is as follows. Can catalyze the hydrolysis of ATP in the presence of single-stranded DNA, the ATP-dependent uptake of single-stranded DNA by duplex DNA, and the ATP-dependent hybridization of homologous single-stranded DNAs. It interacts with LexA causing its activation and leading to its autocatalytic cleavage. The chain is Protein RecA from Streptococcus pneumoniae (strain Hungary19A-6).